The sequence spans 226 residues: 7-cyano-7-deazaguanine synthase (226 aa).

Residue 10–20 (FSGGQDSTTLA) participates in ATP binding. The Zn(2+) site is built by Cys190, Cys205, Cys208, and Cys211.

This sequence belongs to the QueC family. Zn(2+) serves as cofactor.

It carries out the reaction 7-carboxy-7-deazaguanine + NH4(+) + ATP = 7-cyano-7-deazaguanine + ADP + phosphate + H2O + H(+). It functions in the pathway purine metabolism; 7-cyano-7-deazaguanine biosynthesis. Catalyzes the ATP-dependent conversion of 7-carboxy-7-deazaguanine (CDG) to 7-cyano-7-deazaguanine (preQ(0)). This is 7-cyano-7-deazaguanine synthase from Helicobacter pylori (strain ATCC 700392 / 26695) (Campylobacter pylori).